We begin with the raw amino-acid sequence, 102 residues long: Small ribosomal subunit protein uS10 (102 aa).

Belongs to the universal ribosomal protein uS10 family. As to quaternary structure, part of the 30S ribosomal subunit.

In terms of biological role, involved in the binding of tRNA to the ribosomes. This is Small ribosomal subunit protein uS10 from Planobispora rosea.